Here is a 123-residue protein sequence, read N- to C-terminus: MPTIKQLIRNARQLIRNVTKSPTLGGCPQRRGTCTRVYTITPKKPNSALRKVARVRLTSGFEITAYIPGIGHNSQEHSVVLVRGGRVKDLPGVRYHIVRGTLDAVGVKDRQQGRSKYGVKKPK.

This sequence belongs to the universal ribosomal protein uS12 family. Part of the 30S ribosomal subunit.

It is found in the plastid. It localises to the chloroplast. With S4 and S5 plays an important role in translational accuracy. Located at the interface of the 30S and 50S subunits. The sequence is that of Small ribosomal subunit protein uS12cz/uS12cy (rps12-A) from Gossypium barbadense (Sea Island cotton).